A 349-amino-acid chain; its full sequence is MSTLCLPHVMFPQHKITQQQMVDHLENLHADHPRMALAKRMIANTEVNERHLVLPIDELAVHTGFTHRSIVYEREARQMSSAAARQAIENAGLQISDIRMVIVTSCTGFMMPSLTAHLINDLALPTSTVQLPIAQLGCVAGAAAINRANDFARLDARNHVLIVSLEFSSLCYQPDDTKLHAFISAALFGDAVSACVLRADDQAGGFKIKKTESYFLPKSEHYIKYDVKDTGFHFTLDKAVMNSIKDVAPVMERLNYESFEQNCAHNDFFIFHTGGRKILDELVMHLDLASNRVSQSRSSLSEAGNIASVVVFDVLKRQFDSNLNRGDIGLLAAFGPGFTAEMAVGEWTA.

Cys138 is a catalytic residue.

Belongs to the thiolase-like superfamily. Chalcone/stilbene synthases family.

The enzyme catalyses 3 malonyl-CoA + 3 H(+) = 1,3,5-trihydroxybenzene + 3 CO2 + 3 CoA. Its pathway is antibiotic biosynthesis. Type III polyketide synthase that catalyzes the synthesis of phloroglucinol from three molecules of malonyl-CoA. In addition to its ability to produce phloroglucinol from malonyl-CoA, it exhibits broad substrate specificity, accepting C4-C12 aliphatic acyl-CoAs and phenylacetyl-CoA as the starters to form C6-polyoxoalkylated alpha-pyrones from sequential condensation with malonyl-CoA. In Pseudomonas fluorescens (strain ATCC BAA-477 / NRRL B-23932 / Pf-5), this protein is Phloroglucinol synthase.